A 236-amino-acid chain; its full sequence is Purine nucleoside phosphorylase DeoD-type (236 aa).

His4 provides a ligand contact to a purine D-ribonucleoside. Phosphate-binding positions include Gly20, Arg24, Arg43, and 87-90 (RVGT). A purine D-ribonucleoside-binding positions include 179 to 181 (EME) and 203 to 204 (SD). Catalysis depends on Asp204, which acts as the Proton donor.

This sequence belongs to the PNP/UDP phosphorylase family. As to quaternary structure, homohexamer; trimer of homodimers.

The catalysed reaction is a purine D-ribonucleoside + phosphate = a purine nucleobase + alpha-D-ribose 1-phosphate. The enzyme catalyses a purine 2'-deoxy-D-ribonucleoside + phosphate = a purine nucleobase + 2-deoxy-alpha-D-ribose 1-phosphate. Functionally, catalyzes the reversible phosphorolytic breakdown of the N-glycosidic bond in the beta-(deoxy)ribonucleoside molecules, with the formation of the corresponding free purine bases and pentose-1-phosphate. The protein is Purine nucleoside phosphorylase DeoD-type of Streptococcus thermophilus (strain ATCC BAA-491 / LMD-9).